Reading from the N-terminus, the 433-residue chain is UDP-N-acetylmuramoylalanine--D-glutamate ligase (433 aa).

Residue 125 to 131 participates in ATP binding; that stretch reads GTSGKTT.

The protein belongs to the MurCDEF family.

It is found in the cytoplasm. The enzyme catalyses UDP-N-acetyl-alpha-D-muramoyl-L-alanine + D-glutamate + ATP = UDP-N-acetyl-alpha-D-muramoyl-L-alanyl-D-glutamate + ADP + phosphate + H(+). The protein operates within cell wall biogenesis; peptidoglycan biosynthesis. Its function is as follows. Cell wall formation. Catalyzes the addition of glutamate to the nucleotide precursor UDP-N-acetylmuramoyl-L-alanine (UMA). This Nitratidesulfovibrio vulgaris (strain ATCC 29579 / DSM 644 / CCUG 34227 / NCIMB 8303 / VKM B-1760 / Hildenborough) (Desulfovibrio vulgaris) protein is UDP-N-acetylmuramoylalanine--D-glutamate ligase.